A 209-amino-acid chain; its full sequence is Large ribosomal subunit protein bL25 (209 aa).

The interval serine 185–glutamate 209 is disordered. A compositionally biased stretch (acidic residues) spans glycine 190–glutamate 209.

Belongs to the bacterial ribosomal protein bL25 family. CTC subfamily. As to quaternary structure, part of the 50S ribosomal subunit; part of the 5S rRNA/L5/L18/L25 subcomplex. Contacts the 5S rRNA. Binds to the 5S rRNA independently of L5 and L18.

This is one of the proteins that binds to the 5S RNA in the ribosome where it forms part of the central protuberance. The sequence is that of Large ribosomal subunit protein bL25 from Syntrophomonas wolfei subsp. wolfei (strain DSM 2245B / Goettingen).